The following is a 1248-amino-acid chain: Apoptotic protease-activating factor 1 (1248 aa).

The CARD domain maps to 1–90 (MDAKARNCLL…KDLAALLHDG (90 aa)). Positions 104–415 (SGITSYVRTV…METEEVEDIL (312 aa)) constitute an NB-ARC domain. ATP-binding positions include 154 to 161 (GMAGCGKS) and arginine 265. A WD 1-1 repeat occupies 613-652 (PHTDAVYHACFSEDGQRIASCGADKTLQVFKAETGEKLLE). A WD 1-2 repeat occupies 655-694 (AHEDEVLCCAFSTDDRFIATCSVDKKVKIWNSMTGELVHT). Residues 697 to 738 (EHSEQVNCCHFTNSSHHLLLATGSSDCFLKLWDLNQKECRNT) form a WD 1-3 repeat. The stretch at 741-780 (GHTNSVNHCRFSPDDKLLASCSADGTLKLWDATSANERKS) is one WD 1-4 repeat. Residues 796–836 (DMEVIVKCCSWSADGARIMVAAKNKIFLFDIHTSGLLGEIH) form a WD 1-5 repeat. One copy of the WD 1-6 repeat lies at 838–877 (GHHSTIQYCDFSPQNHLAVVALSQYCVELWNTDSRSKVAD). The WD 1-7 repeat unit spans residues 880–910 (GHLSWVHGVMFSPDGSSFLTSSDDQTIRLWE). Residues 910-921 (ETKKVCKNSAVM) form an interpropeller linker region. The WD 2-1 repeat unit spans residues 922–958 (LKQEVDVVFQENEVMVLAVDHIRRLQLINGRTGQIDY). The stretch at 959-998 (LTEAQVSCCCLSPHLQYIAFGDENGAIEILELVNNRIFQS) is one WD 2-2 repeat. One copy of the WD 2-3 repeat lies at 1001 to 1040 (QHKKTVWHIQFTADEKTLISSSDDAEIQVWNWQLDKCIFL). Residues 1042-1080 (GHQETVKDFRLLKNSRLLSWSFDGTVKVWNIITGNKEKD) form a WD 2-4 repeat. One copy of the WD 2-5 repeat lies at 1083–1122 (CHQGTVLSCDISHDATKFSSTSADKTAKIWSFDLLLPLHE). The WD 2-6 repeat unit spans residues 1125 to 1164 (GHNGCVRCSAFSVDSTLLATGDDNGEIRIWNVSNGELLHL). One copy of the WD 2-7 repeat lies at 1175-1212 (THGGWVTDLCFSPDGKMLISAGGYIKWWNVVTGESSQT). The stretch at 1213 to 1248 (FYTNGTNLKKIHVSPDFKTYVTVDNLGILYILQTLE) is one WD 2-8 repeat.

Monomer. Oligomerizes to a heptameric ring, known as the apoptosome, upon binding of cytochrome c and dATP. Oligomeric Apaf-1 and pro-caspase-9 bind to each other via their respective NH2-terminal CARD domains and consecutively mature caspase-9 is released from the complex. Pro-caspase-3 is recruited into the Apaf-1-pro-caspase-9 complex via interaction with pro-caspase-9. Interacts with APIP. Interacts (via CARD and NACHT domains) with NAIP/BIRC1 (via NACHT domain). Interacts with CIAO2A. As to expression, ubiquitous. Highest levels of expression in adult spleen and peripheral blood leukocytes, and in fetal brain, kidney and lung. Isoform 1 is expressed in heart, kidney and liver.

It localises to the cytoplasm. Functionally, oligomeric Apaf-1 mediates the cytochrome c-dependent autocatalytic activation of pro-caspase-9 (Apaf-3), leading to the activation of caspase-3 and apoptosis. This activation requires ATP. Isoform 6 is less effective in inducing apoptosis. The protein is Apoptotic protease-activating factor 1 of Homo sapiens (Human).